A 347-amino-acid chain; its full sequence is Transcription elongation factor A protein 3 (347 aa).

Residues 5-82 (EELLRIAKKL…KNWKRLLDSP (78 aa)) form the TFIIS N-terminal domain. Positions 83 to 100 (RTTKGEREEREKAKKEKG) are enriched in basic and acidic residues. The disordered stretch occupies residues 83 to 168 (RTTKGEREER…TTPSSPSTPT (86 aa)). Position 113 is a phosphoserine (Ser113). Residues 119–131 (GGGEPKTRRDSVD) are compositionally biased toward basic and acidic residues. Low complexity-rich tracts occupy residues 132 to 142 (SRSSTTSSPKR) and 157 to 168 (TPTTPSSPSTPT). Ser139 is subject to Phosphoserine. The 117-residue stretch at 186–302 (VRDKCVEMLS…EHQMAKTGGT (117 aa)) folds into the TFIIS central domain. The TFIIS-type zinc-finger motif lies at 305 to 345 (DLLRCSKCKKKNCTYNQVQTRSADEPMTTFVLCNECGNRWK). Residues Cys309, Cys312, Cys337, and Cys340 each contribute to the Zn(2+) site.

The protein belongs to the TFS-II family. As to expression, liver, kidney and heart.

The protein localises to the nucleus. In terms of biological role, necessary for efficient RNA polymerase II transcription elongation past template-encoded arresting sites. The arresting sites in DNA have the property of trapping a certain fraction of elongating RNA polymerases that pass through, resulting in locked ternary complexes. Cleavage of the nascent transcript by S-II allows the resumption of elongation from the new 3'-terminus. The sequence is that of Transcription elongation factor A protein 3 (Tcea3) from Mus musculus (Mouse).